The following is a 591-amino-acid chain: Aspartate--tRNA(Asp/Asn) ligase (591 aa).

Residue glutamate 174 coordinates L-aspartate. Residues glutamine 198 to lysine 201 are aspartate. Position 220 (arginine 220) interacts with L-aspartate. Residues arginine 220 to glutamate 222 and glutamine 229 contribute to the ATP site. L-aspartate is bound at residue histidine 450. ATP is bound at residue glutamate 483. Arginine 490 contacts L-aspartate. Glycine 535–arginine 538 is an ATP binding site.

This sequence belongs to the class-II aminoacyl-tRNA synthetase family. Type 1 subfamily. Homodimer.

The protein resides in the cytoplasm. The enzyme catalyses tRNA(Asx) + L-aspartate + ATP = L-aspartyl-tRNA(Asx) + AMP + diphosphate. In terms of biological role, aspartyl-tRNA synthetase with relaxed tRNA specificity since it is able to aspartylate not only its cognate tRNA(Asp) but also tRNA(Asn). Reaction proceeds in two steps: L-aspartate is first activated by ATP to form Asp-AMP and then transferred to the acceptor end of tRNA(Asp/Asn). The sequence is that of Aspartate--tRNA(Asp/Asn) ligase from Pseudomonas fluorescens (strain SBW25).